The primary structure comprises 86 residues: Small ribosomal subunit protein bS18 (86 aa).

Belongs to the bacterial ribosomal protein bS18 family. Part of the 30S ribosomal subunit. Forms a tight heterodimer with protein bS6.

In terms of biological role, binds as a heterodimer with protein bS6 to the central domain of the 16S rRNA, where it helps stabilize the platform of the 30S subunit. The chain is Small ribosomal subunit protein bS18 from Campylobacter concisus (strain 13826).